We begin with the raw amino-acid sequence, 437 residues long: Elongation factor 1-alpha (437 aa).

In terms of domain architecture, tr-type G spans 4–229 (KPHMNLVVIG…DQLQPPAKPV (226 aa)). A G1 region spans residues 13 to 20 (GHVDHGKS). 13–20 (GHVDHGKS) serves as a coordination point for GTP. Position 20 (S20) interacts with Mg(2+). Residues 69-73 (GITID) are G2. The interval 90–93 (DAPG) is G3. GTP is bound by residues 90–94 (DAPGH) and 152–155 (NKMD). Residues 152-155 (NKMD) are G4. Residues 193-195 (SAW) form a G5 region.

Belongs to the TRAFAC class translation factor GTPase superfamily. Classic translation factor GTPase family. EF-Tu/EF-1A subfamily.

The protein resides in the cytoplasm. It carries out the reaction GTP + H2O = GDP + phosphate + H(+). Functionally, GTP hydrolase that promotes the GTP-dependent binding of aminoacyl-tRNA to the A-site of ribosomes during protein biosynthesis. In Aeropyrum pernix (strain ATCC 700893 / DSM 11879 / JCM 9820 / NBRC 100138 / K1), this protein is Elongation factor 1-alpha.